Reading from the N-terminus, the 107-residue chain is Phosphoribosyl-ATP pyrophosphatase (107 aa).

Belongs to the PRA-PH family.

The protein resides in the cytoplasm. The catalysed reaction is 1-(5-phospho-beta-D-ribosyl)-ATP + H2O = 1-(5-phospho-beta-D-ribosyl)-5'-AMP + diphosphate + H(+). The protein operates within amino-acid biosynthesis; L-histidine biosynthesis; L-histidine from 5-phospho-alpha-D-ribose 1-diphosphate: step 2/9. In Bacillus cereus (strain Q1), this protein is Phosphoribosyl-ATP pyrophosphatase.